We begin with the raw amino-acid sequence, 452 residues long: Lipase member H (452 aa).

Residues Met-1–Ser-16 form the signal peptide. N-linked (GlcNAc...) asparagine glycans are attached at residues Asn-50, Asn-66, and Asn-122. Residue Ser-154 is the Nucleophile of the active site. The active-site Charge relay system is Asp-178. An intrachain disulfide couples Cys-233 to Cys-247. His-249 acts as the Charge relay system in catalysis. A glycan (N-linked (GlcNAc...) asparagine) is linked at Asn-263. Disulfide bonds link Cys-271–Cys-282, Cys-285–Cys-293, and Cys-428–Cys-447.

Belongs to the AB hydrolase superfamily. Lipase family. As to quaternary structure, interacts with TTMP/C3orf52. In terms of tissue distribution, expressed in liver and lacrimal gland.

The protein resides in the secreted. It is found in the cell membrane. The enzyme catalyses 1-hexadecanoyl-2-(9Z-octadecenoyl)-sn-glycero-3-phosphate + H2O = 2-(9Z-octadecenoyl)-sn-glycero-3-phosphate + hexadecanoate + H(+). In terms of biological role, hydrolyzes specifically phosphatidic acid (PA) to produce 2-acyl lysophosphatidic acid (LPA; a potent bioactive lipid mediator) and fatty acid. Does not hydrolyze other phospholipids, like phosphatidylserine (PS), phosphatidylcholine (PC) and phosphatidylethanolamine (PE) or triacylglycerol (TG). The chain is Lipase member H (LIPH) from Oryctolagus cuniculus (Rabbit).